Consider the following 471-residue polypeptide: MSVLKEYRTVSEVVGPLMIVDQVAGVHYNELVDITLHNGERRKGQVLEVQGDKAMVQLFEGSTGINLAKTKVRFTGHPLELAVSEDMVGRIFDGMGHPIDGGPELIPEKYLDIDGQAINPVARDYPDEFIQTGISAIDHLNTLVRGQKLPVFSGSGLPHNELAAQIARQATVLNSDDNFAVVFAAMGITFEEAEFFMNDLRETGAIDRSVLFINLANDPAIERIATPRIALTTAEYLAYEKGMHVLVIMTDMTNYCEALREVSAARREVPGRRGYPGYLYTNLSTLYERAGRLIGKKGSVTQIPILTMPEDDITHPIPDLTGYITEGQIILSQELYKNGFRPPINVLPSLSRLKDKGSGEGKTRQDHAATMNQLFAAYAQGKQAKELAVVLGESALSETDKLYVAFTNRFEEEYINQGLYTNRSIEESLDLGWELLSILPRTELKRIKDDMLDRYLPKADTTMTKVFVAND.

This sequence belongs to the ATPase alpha/beta chains family.

Its function is as follows. Produces ATP from ADP in the presence of a proton gradient across the membrane. The V-type beta chain is a regulatory subunit. In Streptococcus pyogenes serotype M28 (strain MGAS6180), this protein is V-type ATP synthase beta chain.